We begin with the raw amino-acid sequence, 181 residues long: GTP cyclohydrolase 1 2 (181 aa).

Belongs to the GTP cyclohydrolase I family. As to quaternary structure, homomer.

It catalyses the reaction GTP + H2O = 7,8-dihydroneopterin 3'-triphosphate + formate + H(+). The protein operates within cofactor biosynthesis; 7,8-dihydroneopterin triphosphate biosynthesis; 7,8-dihydroneopterin triphosphate from GTP: step 1/1. This chain is GTP cyclohydrolase 1 2, found in Pseudomonas syringae pv. tomato (strain ATCC BAA-871 / DC3000).